A 281-amino-acid polypeptide reads, in one-letter code: Cell division protein DivIB (281 aa).

Residues 1-36 (MARKRITRRDPEEELSKFLRHEPGQGQETRKLSSQL) form a disordered region. Topologically, residues 1 to 46 (MARKRITRRDPEEELSKFLRHEPGQGQETRKLSSQLTSLKKERRRG) are cytoplasmic. The segment covering 8–31 (RRDPEEELSKFLRHEPGQGQETRK) has biased composition (basic and acidic residues). The helical transmembrane segment at 47–69 (LLTRLGSIMAVCLLAIAFLTYYV) threads the bilayer. At 70-281 (SPLADVSTVR…SAEKKAYGLS (212 aa)) the chain is on the extracellular side. Positions 73 to 144 (ADVSTVRVLG…NTLNMQVHER (72 aa)) constitute a POTRA domain.

This sequence belongs to the FtsQ/DivIB family. DivIB subfamily.

The protein localises to the cell membrane. Functionally, cell division protein that may be involved in stabilizing or promoting the assembly of the division complex. The polypeptide is Cell division protein DivIB (Lactobacillus delbrueckii subsp. bulgaricus (strain ATCC 11842 / DSM 20081 / BCRC 10696 / JCM 1002 / NBRC 13953 / NCIMB 11778 / NCTC 12712 / WDCM 00102 / Lb 14)).